The sequence spans 487 residues: Protein translocase subunit SecY (487 aa).

At 1–20 (MSWKDTAEPLLVRMPAVQRP) the chain is on the cytoplasmic side. The chain crosses the membrane as a helical span at residues 21–47 (EGHVPFKRKLTWTGGVLLLYFFLTNVK). At 48 to 59 (LFGLDIDASQQV) the chain is on the extracellular side. The helical intramembrane region spans 60 to 67 (FGRFSSIL). Residues 60 to 88 (FGRFSSILASGQGSIMQLGIGPIVTASIV) traverse the membrane as a discontinuously helical segment. Residues 68 to 79 (ASGQGSIMQLGI) lie within the membrane without spanning it. Positions 80 to 88 (GPIVTASIV) form an intramembrane region, helical. Over 89 to 110 (LQLLGGADLLGLNTQDDPRDQI) the chain is Cytoplasmic. A helical transmembrane segment spans residues 111–135 (LYQGLQKLLVLVMICLTGLPMVFAG). Residues 136–153 (GFLPADTAVANSLGIGTA) are Extracellular-facing. Residues 154–178 (GVQWLIFAQMFVGGVLILFMDEVIS) traverse the membrane as a helical segment. Over 179–184 (KWGVGS) the chain is Cytoplasmic. Residues 185-203 (GIGLFIVAGVSQRLVGGLL) traverse the membrane as a helical segment. Residues 204–244 (TAPFLGNSEGIIYTWYLFITGERGTGPVLAADGLQTVLLQG) are Extracellular-facing. The chain crosses the membrane as a helical span at residues 245–266 (ELLGLFTTVLIFAVVVYAESVR). Residues 267–291 (VEIPLSNARVKGARGRFPVKLIYAS) lie on the Cytoplasmic side of the membrane. The chain crosses the membrane as a helical span at residues 292–313 (VLPMILVRALQANIQFLGRILN). Residues 314–364 (AQLGSMPAFLGTYANGQPTGGLFYFLAPIQSRGDWMWWLEGTAQPVWQILT) lie on the Extracellular side of the membrane. Residues 365-384 (RVGIDLFVMLVGGAVFAVFW) form a helical membrane-spanning segment. The Cytoplasmic segment spans residues 385 to 427 (VETTDMGPEATAKQIHNSGMQIPGFRQNVGVIEKVLERYIPQV). The helical transmembrane segment at 428-446 (TVIGGALVGLLAVMANMLG) threads the bilayer. Residues 447–451 (TIGGV) are Extracellular-facing. The chain crosses the membrane as a helical span at residues 452-466 (SGTGLLLTVSITYKL). Over 467-487 (YEEIAEEQLMEMHPMMRQMFG) the chain is Cytoplasmic.

Belongs to the SecY/SEC61-alpha family. Component of the Sec protein translocase complex. Heterotrimer consisting of alpha (SecY), beta (SecG) and gamma (SecE) subunits. The heterotrimers can form oligomers, although 1 heterotrimer is thought to be able to translocate proteins. Interacts with the ribosome. May interact with SecDF, and other proteins may be involved.

The protein resides in the cell membrane. Functionally, the central subunit of the protein translocation channel SecYEG. Consists of two halves formed by TMs 1-5 and 6-10. These two domains form a lateral gate at the front which open onto the bilayer between TMs 2 and 7, and are clamped together by SecE at the back. The channel is closed by both a pore ring composed of hydrophobic SecY resides and a short helix (helix 2A) on the extracellular side of the membrane which forms a plug. The plug probably moves laterally to allow the channel to open. The ring and the pore may move independently. This chain is Protein translocase subunit SecY, found in Haloarcula marismortui (strain ATCC 43049 / DSM 3752 / JCM 8966 / VKM B-1809) (Halobacterium marismortui).